Here is a 535-residue protein sequence, read N- to C-terminus: Dual specificity calcium/calmodulin-dependent 3',5'-cyclic nucleotide phosphodiesterase 1B (535 aa).

Residues methionine 1–glutamate 21 form a disordered region. A phosphoserine mark is found at serine 7 and serine 14. Calmodulin-binding regions lie at residues serine 27–asparagine 47 and glutamate 117–arginine 140. Residues valine 145–glycine 502 form the PDEase domain. Histidine 222 acts as the Proton donor in catalysis. 4 residues coordinate Zn(2+): histidine 226, histidine 262, aspartate 263, and aspartate 369. Position 263 (aspartate 263) interacts with Mg(2+). Disordered stretches follow at residues proline 445–asparagine 474 and tryptophan 495–aspartate 535. Polar residues predominate over residues lysine 454–glutamine 463. Serine 465 and serine 513 each carry phosphoserine.

The protein belongs to the cyclic nucleotide phosphodiesterase family. PDE1 subfamily. As to quaternary structure, homodimer. Requires Zn(2+) as cofactor. Mg(2+) is required as a cofactor. In terms of tissue distribution, expressed in brain.

Its subcellular location is the cytoplasm. The protein resides in the cytosol. It catalyses the reaction a nucleoside 3',5'-cyclic phosphate + H2O = a nucleoside 5'-phosphate + H(+). It carries out the reaction 3',5'-cyclic GMP + H2O = GMP + H(+). The catalysed reaction is 3',5'-cyclic AMP + H2O = AMP + H(+). Type I PDE are activated by the binding of calmodulin in the presence of Ca(2+). In terms of biological role, cyclic nucleotide phosphodiesterase with a dual specificity for the second messengers cAMP and cGMP, which are key regulators of many important physiological processes. Has a preference for cGMP as a substrate. This Rattus norvegicus (Rat) protein is Dual specificity calcium/calmodulin-dependent 3',5'-cyclic nucleotide phosphodiesterase 1B.